We begin with the raw amino-acid sequence, 156 residues long: Small ribosomal subunit protein uS7 (156 aa).

The protein belongs to the universal ribosomal protein uS7 family. Part of the 30S ribosomal subunit. Contacts proteins S9 and S11.

One of the primary rRNA binding proteins, it binds directly to 16S rRNA where it nucleates assembly of the head domain of the 30S subunit. Is located at the subunit interface close to the decoding center, probably blocks exit of the E-site tRNA. This chain is Small ribosomal subunit protein uS7, found in Corynebacterium jeikeium (strain K411).